A 575-amino-acid polypeptide reads, in one-letter code: Developmental and secondary metabolism regulator VEL1 (575 aa).

Positions 21–225 (GRKLKYTLTV…AEQGCRVRIR (205 aa)) constitute a Velvet domain. Positions 35–40 (ERARAC) match the Nuclear localization signal motif. 2 disordered regions span residues 36-56 (RARACGSGAKSSADRRPVDPP) and 227-402 (DVRM…QSYE). The segment covering 274-284 (VHEDPQQRRGS) has biased composition (basic and acidic residues). A compositionally biased stretch (polar residues) spans 294–308 (VVNTPFRTPSISPST). Residues 334-346 (IQPPHPPPPPPSS) show a composition bias toward pro residues. Composition is skewed to polar residues over residues 355–365 (HHNQGPSTQFR) and 385–402 (SYSQFRPPTNPSQQQSYE). The tract at residues 465-509 (AEQPLAMSPLASVTSISRGTQNSAPMPSHNYNKLERSGSYSQYAP) is PEST. The segment at 513-549 (EAPKSTNKRSFNDVFSTPTESLSNGRRPSAIGIDIEE) is disordered. Positions 516 to 538 (KSTNKRSFNDVFSTPTESLSNGR) are enriched in polar residues.

This sequence belongs to the velvet family. VeA subfamily. As to quaternary structure, component of the heterotrimeric velvet complex composed of LAE1, VEL1 and VEL2; VEL1 acting as a bridging protein between LAE1 and VEL2.

Its subcellular location is the nucleus. The protein localises to the cytoplasm. Functionally, component of the velvet transcription factor complex that controls sexual/asexual developmental ratio in response to light, promoting sexual development in the darkness while stimulating asexual sporulation under illumination. The velvet complex hat acts as a global regulator for secondary metabolite gene expression. Controls the expression of the oxalic acid and melanin gene clusters. Also controls the expression of proteases and carbohydrate-active enzymes. Involved in the resistance to oxidative stress. Required for full virulence. The chain is Developmental and secondary metabolism regulator VEL1 from Botryotinia fuckeliana (strain B05.10) (Noble rot fungus).